The following is a 354-amino-acid chain: Rhodopsin (354 aa).

The Extracellular segment spans residues 1 to 36 (MNGTEGENFYVPMSNKTGVVRNPFEYPQYYLADHWM). N-linked (GlcNAc...) asparagine glycosylation is found at N2 and N15. Residues 37-61 (FAVLAAYMFFLIITGFPVNFLTLFV) traverse the membrane as a helical segment. The Cytoplasmic portion of the chain corresponds to 62–73 (TIQNKKLRQPLN). Residues 74–96 (YILLNLAVANLFMVFGGFTTTLI) form a helical membrane-spanning segment. Residues 97–110 (TSMNGYFVFGSTGC) lie on the Extracellular side of the membrane. C110 and C187 are oxidised to a cystine. A helical transmembrane segment spans residues 111-133 (NLEGFFATLGGEISLWSLVVLAI). The short motif at 134–136 (ERY) is the 'Ionic lock' involved in activated form stabilization element. Over 134-152 (ERYVVVCKPMSNFRFGSQH) the chain is Cytoplasmic. A helical membrane pass occupies residues 153 to 173 (AIAGVSLTWVMAMACAAPPLV). The Extracellular portion of the chain corresponds to 174 to 202 (GWSRYIPEGLQCSCGIDYYTPKPEINNVS). A glycan (N-linked (GlcNAc...) asparagine) is linked at N200. Residues 203–224 (FVIYMFVVHFSIPLTIIFFCYG) form a helical membrane-spanning segment. At 225–252 (RLVCTVKAAAAQQQESETTQRAEREVTR) the chain is on the cytoplasmic side. Residues 253–274 (MVVIMVIGFLICWLPYASVALY) traverse the membrane as a helical segment. The Extracellular portion of the chain corresponds to 275 to 286 (IFNNQGSEFGPV). The chain crosses the membrane as a helical span at residues 287–308 (FMTIPSFFAKSSALYNPLIYIL). K296 is modified (N6-(retinylidene)lysine). At 309–354 (MNKQFRNCMITTLCCGKNPFEEEESTSASASKTEASSVSSSQVSPA) the chain is on the cytoplasmic side. Residues C322 and C323 are each lipidated (S-palmitoyl cysteine). A disordered region spans residues 333–354 (STSASASKTEASSVSSSQVSPA). Positions 334-354 (TSASASKTEASSVSSSQVSPA) are enriched in low complexity.

It belongs to the G-protein coupled receptor 1 family. Opsin subfamily. In terms of processing, phosphorylated on some or all of the serine and threonine residues present in the C-terminal region. Contains one covalently linked retinal chromophore.

It is found in the membrane. It localises to the cell projection. The protein localises to the cilium. Its subcellular location is the photoreceptor outer segment. Photoreceptor required for image-forming vision at low light intensity. While most salt water fish species use retinal as chromophore, most freshwater fish use 3-dehydroretinal, or a mixture of retinal and 3-dehydroretinal. Light-induced isomerization of 11-cis to all-trans retinal triggers a conformational change that activates signaling via G-proteins. Subsequent receptor phosphorylation mediates displacement of the bound G-protein alpha subunit by arrestin and terminates signaling. The chain is Rhodopsin (rho) from Galeus melastomus (Blackmouth catshark).